A 1401-amino-acid chain; its full sequence is DNA polymerase III PolC-type (1401 aa).

An Exonuclease domain is found at 388-543 (FVVFDIETTG…EDAKATAEIF (156 aa)).

This sequence belongs to the DNA polymerase type-C family. PolC subfamily.

The protein resides in the cytoplasm. The enzyme catalyses DNA(n) + a 2'-deoxyribonucleoside 5'-triphosphate = DNA(n+1) + diphosphate. Required for replicative DNA synthesis. This DNA polymerase also exhibits 3' to 5' exonuclease activity. This Caldanaerobacter subterraneus subsp. tengcongensis (strain DSM 15242 / JCM 11007 / NBRC 100824 / MB4) (Thermoanaerobacter tengcongensis) protein is DNA polymerase III PolC-type.